Here is a 463-residue protein sequence, read N- to C-terminus: Chromosomal replication initiator protein DnaA (463 aa).

Residues 1–83 (MSTNQIILTD…LQLFQHYNNT (83 aa)) are domain I, interacts with DnaA modulators. The domain II stretch occupies residues 83-124 (TIKSIEIITKELPGTTQTVTELPTKTFADIGSSELNSENIFS). Residues 125–343 (TLDARFTFDN…GALNKVIAHS (219 aa)) are domain III, AAA+ region. Residues Gly171, Gly173, Lys174, and Thr175 each coordinate ATP. The interval 344 to 463 (NFTLKEITLE…INLLMKILQN (120 aa)) is domain IV, binds dsDNA.

This sequence belongs to the DnaA family. As to quaternary structure, oligomerizes as a right-handed, spiral filament on DNA at oriC.

The protein localises to the cytoplasm. In terms of biological role, plays an essential role in the initiation and regulation of chromosomal replication. ATP-DnaA binds to the origin of replication (oriC) to initiate formation of the DNA replication initiation complex once per cell cycle. Binds the DnaA box (a 9 base pair repeat at the origin) and separates the double-stranded (ds)DNA. Forms a right-handed helical filament on oriC DNA; dsDNA binds to the exterior of the filament while single-stranded (ss)DNA is stabiized in the filament's interior. The ATP-DnaA-oriC complex binds and stabilizes one strand of the AT-rich DNA unwinding element (DUE), permitting loading of DNA polymerase. After initiation quickly degrades to an ADP-DnaA complex that is not apt for DNA replication. Binds acidic phospholipids. This Rickettsia peacockii (strain Rustic) protein is Chromosomal replication initiator protein DnaA.